The chain runs to 92 residues: C-C motif chemokine 5 (92 aa).

A signal peptide spans Met1–Ala23. 2 disulfides stabilise this stretch: Cys33/Cys57 and Cys34/Cys73.

The protein belongs to the intercrine beta (chemokine CC) family.

Its subcellular location is the secreted. Chemoattractant for blood monocytes, memory T-helper cells and eosinophils. Causes the release of histamine from basophils and activates eosinophils. May activate several chemokine receptors including CCR1, CCR3, CCR4 and CCR5. May also be an agonist of the G protein-coupled receptor GPR75. Together with GPR75, may play a role in neuron survival through activation of a downstream signaling pathway involving the PI3, Akt and MAP kinases. By activating GPR75 may also play a role in insulin secretion by islet cells. In Felis catus (Cat), this protein is C-C motif chemokine 5 (CCL5).